Here is a 310-residue protein sequence, read N- to C-terminus: Elongation factor Ts (310 aa).

The tract at residues 80–83 is involved in Mg(2+) ion dislocation from EF-Tu; that stretch reads TDFV.

Belongs to the EF-Ts family.

Its subcellular location is the cytoplasm. In terms of biological role, associates with the EF-Tu.GDP complex and induces the exchange of GDP to GTP. It remains bound to the aminoacyl-tRNA.EF-Tu.GTP complex up to the GTP hydrolysis stage on the ribosome. This chain is Elongation factor Ts, found in Beijerinckia indica subsp. indica (strain ATCC 9039 / DSM 1715 / NCIMB 8712).